We begin with the raw amino-acid sequence, 1129 residues long: Serine/threonine-protein kinase LATS1 (1129 aa).

The span at 1 to 11 shows a compositional bias: basic and acidic residues; it reads MKRGEKPEGYR. The segment at 1 to 71 is disordered; sequence MKRGEKPEGY…PRQVRNPPKF (71 aa). Residues 19–30 are compositionally biased toward polar residues; it reads PASNYPGSSRQM. The span at 46-64 shows a compositional bias: basic and acidic residues; that stretch reads DASKAEHNLNKMSTEDPRQ. Residues 100–141 form the UBA domain; it reads EVNPQMFQDLQAAGFDEDMVIQALQKTNNRSIEAAVEFISKM. Disordered stretches follow at residues 148–216 and 228–276; these read REQM…RPLS and PSNG…QTKR. Residues 235–268 show a composition bias toward pro residues; it reads NPPPPPQVRSVTPPPPPRGQTPPPRGTTPPPPSW. Phosphothreonine is present on Thr246. Position 278 is a phosphoserine (Ser278). 4 disordered regions span residues 292-317, 363-407, 432-492, and 513-630; these read PPGAWQEGYPPPPLTTSPMNPPSQAQ, PTGS…VPQS, WPQS…TPAP, and PTHP…ESRI. A compositionally biased stretch (pro residues) spans 300–312; that stretch reads YPPPPLTTSPMNP. The PPxY motif 1 signature appears at 372 to 375; that stretch reads PPPY. The span at 380–392 shows a compositional bias: polar residues; it reads ANGQSPSALQTGA. A compositionally biased stretch (low complexity) spans 433–445; sequence PQSSSAPAQSSPS. Positions 453 to 481 are enriched in polar residues; it reads WQPNIPVRSNSFNNPLGSRASHSANSQPS. Ser463 is subject to Phosphoserine; by NUAK1 and NUAK2. 2 stretches are compositionally biased toward low complexity: residues 482–492 and 520–530; these read ATTVTAITPAP and PQPVQTVQPTP. Residues 525 to 654 form an interaction with YAP1 region; sequence TVQPTPFSEG…HVENVLKSHQ (130 aa). Residues 555–558 carry the PPxY motif 2 motif; the sequence is PPPY. Over residues 578 to 608 the composition is skewed to basic and acidic residues; sequence PCKDEQPSLPKEDDSEKSADSGDSGDKEKKQ. Ser612 bears the Phosphoserine mark. The span at 620 to 629 shows a compositional bias: basic and acidic residues; the sequence is KKDEERRESR. Phosphoserine is present on Ser673. The Protein kinase domain maps to 704–1009; sequence FVKIKTLGIG…ADEIKAHPFF (306 aa). Residues 710–718 and Lys733 each bind ATP; that span reads LGIGAFGEV. The active-site Proton acceptor is Asp827. Ser908 is modified (phosphoserine; by STK3/MST2). The AGC-kinase C-terminal domain occupies 1010–1089; sequence KTIDFSSDLR…RRFFDDNGYP (80 aa). A Phosphothreonine; by STK3/MST2 modification is found at Thr1078. The segment at 1104-1129 is disordered; that stretch reads QGSEQQSDEDDQHTSSDGNNRDLVYV.

The protein belongs to the protein kinase superfamily. AGC Ser/Thr protein kinase family. Complexes with CDK1 in early mitosis. LATS1-associated CDK1 has no mitotic cyclin partner and no apparent kinase activity. Binds phosphorylated ZYX, locating this protein to the mitotic spindle and suggesting a role for actin regulatory proteins during mitosis. Binds to and colocalizes with LIMK1 at the actomyosin contractile ring during cytokinesis. Interacts (via PPxY motif 2) with YAP1 (via WW domains). Interacts with MOB1A and MOB1B. Interacts with LIMD1, WTIP and AJUBA. Interacts with ESR1, DCAF1 and DCAF13; probably recruits DCAF1 and DCAF13 to ESR1 to promote ESR1 ubiquitination and ubiquitin-mediated proteasomal degradation. Interacts with STK3/MST2; this interaction is inhibited in the presence of DLG5. Interacts with SCRIB in the presence of DLG5. Interacts with WWTR1/TAZ. Interacts with WWC1, WWC2 and WWC3 (via their WW domains). It depends on Mg(2+) as a cofactor. Autophosphorylated and phosphorylated during M-phase of the cell cycle. Phosphorylated by STK3/MST2 at Ser-908 and Thr-1078, which results in its activation. Phosphorylated by MAP4Ks; in parallel to STK3/MST2 and resulting to its activation. Phosphorylation at Ser-463 by NUAK1 and NUAK2 leads to decreased protein level and is required to regulate cellular senescence and cellular ploidy.

It localises to the cytoplasm. The protein resides in the cytoskeleton. Its subcellular location is the microtubule organizing center. The protein localises to the centrosome. It is found in the spindle. It localises to the midbody. The protein resides in the spindle pole body. It carries out the reaction L-seryl-[protein] + ATP = O-phospho-L-seryl-[protein] + ADP + H(+). The catalysed reaction is L-threonyl-[protein] + ATP = O-phospho-L-threonyl-[protein] + ADP + H(+). Its function is as follows. Negative regulator of YAP1 in the Hippo signaling pathway that plays a pivotal role in organ size control and tumor suppression by restricting proliferation and promoting apoptosis. The core of this pathway is composed of a kinase cascade wherein STK3/MST2 and STK4/MST1, in complex with its regulatory protein SAV1, phosphorylates and activates LATS1/2 in complex with its regulatory protein MOB1, which in turn phosphorylates and inactivates YAP1 oncoprotein and WWTR1/TAZ. Phosphorylation of YAP1 by LATS1 inhibits its translocation into the nucleus to regulate cellular genes important for cell proliferation, cell death, and cell migration. Acts as a tumor suppressor which plays a critical role in maintenance of ploidy through its actions in both mitotic progression and the G1 tetraploidy checkpoint. Negatively regulates G2/M transition by down-regulating CDK1 kinase activity. Involved in the control of p53 expression. Affects cytokinesis by regulating actin polymerization through negative modulation of LIMK1. May also play a role in endocrine function. Plays a role in mammary gland epithelial cell differentiation, both through the Hippo signaling pathway and the intracellular estrogen receptor signaling pathway by promoting the degradation of ESR1. Acts as an activator of the NLRP3 inflammasome by mediating phosphorylation of 'Ser-265' of NLRP3 following NLRP3 palmitoylation, promoting NLRP3 activation by NEK7. This is Serine/threonine-protein kinase LATS1 from Mus musculus (Mouse).